Consider the following 414-residue polypeptide: tRNA dimethylallyltransferase (414 aa).

33 to 40 is an ATP binding site; it reads APTASGKT. 35-40 contacts substrate; the sequence is TASGKT. Interaction with substrate tRNA regions lie at residues 58–61, 182–186, and 266–271; these read DSAL, QRITR, and RCVGYR.

Belongs to the IPP transferase family. In terms of assembly, monomer. Mg(2+) is required as a cofactor.

It catalyses the reaction adenosine(37) in tRNA + dimethylallyl diphosphate = N(6)-dimethylallyladenosine(37) in tRNA + diphosphate. Catalyzes the transfer of a dimethylallyl group onto the adenine at position 37 in tRNAs that read codons beginning with uridine, leading to the formation of N6-(dimethylallyl)adenosine (i(6)A). In Psychrobacter cryohalolentis (strain ATCC BAA-1226 / DSM 17306 / VKM B-2378 / K5), this protein is tRNA dimethylallyltransferase.